Consider the following 190-residue polypeptide: Protein shisa-like-2A (190 aa).

2 helical membrane-spanning segments follow: residues 48 to 68 and 70 to 90; these read SFFPYEHSYMWWLSIGALIGL and VAAVVLLAFIVTACVLCYLFI.

It belongs to the shisa family.

It localises to the membrane. The sequence is that of Protein shisa-like-2A from Homo sapiens (Human).